The following is a 278-amino-acid chain: BPI fold-containing family A member 1 (278 aa).

Positions 1-19 (MFLVGSLVVLCGLLAHSTA) are cleaved as a signal peptide. 4 Repeat repeats span residues 23-28 (GLPLPL), 30-36 (QGPPLPL), 39-44 (GPPLPL), and 47-52 (GQLLPL). Residues 23 to 52 (GLPLPLGQGPPLPLNQGPPLPLNQGQLLPL) are 4 X 6 AA repeats of G-[LPQ]-[PL]-L-P-L. The interval 112–117 (LVGGLL) is important for surfactant activity and antibacterial properties. Residues Asn182 and Asn228 are each glycosylated (N-linked (GlcNAc...) asparagine). A disulfide bond links Cys204 and Cys246.

Belongs to the BPI/LBP/Plunc superfamily. Plunc family. Monomer. Interacts (via N-terminus) with SCNN1B, a subunit of the heterotrimeric epithelial sodium channel (ENaC); this inhibits proteolytic activation of ENaC. As to expression, detected in airway epithelia (trachea and lung) and in bronchoalveolar fluid (at protein level). Upper airways, nasopharyngeal epithelium and thymus. Highest expression in the trachea and progressive decrease from proximal (bronchial) to distal (bronchiolar) airways. No expression is detected in the terminal bronchioles, respiratory bronchioles or lung alveoli.

The protein localises to the secreted. Lipid-binding protein which shows high specificity for the surfactant phospholipid dipalmitoylphosphatidylcholine (DPPC). Plays a role in the innate immune responses of the upper airways. Reduces the surface tension in secretions from airway epithelia and inhibits the formation of biofilm by pathogenic Gram-negative bacteria, such as P.aeruginosa and K.pneumoniae. Negatively regulates proteolytic cleavage of SCNN1G, an event that is required for activation of the epithelial sodium channel (ENaC), and thereby contributes to airway surface liquid homeostasis and proper clearance of mucus. Plays a role in the airway inflammatory response after exposure to irritants. May attract macrophages and neutrophils. This Mus musculus (Mouse) protein is BPI fold-containing family A member 1 (Bpifa1).